Consider the following 262-residue polypeptide: Undecaprenyl-diphosphatase (262 aa).

The next 8 helical transmembrane spans lie at 15–35 (LTEW…IILL), 38–58 (SSAA…IVAF), 91–111 (LYIL…AKYV), 114–134 (IFGS…LLYS), 149–169 (ALIV…RSGA), 189–209 (FLLS…VSPA), 219–239 (VGLL…LSII), and 242–262 (GRLH…LSLL).

This sequence belongs to the UppP family.

The protein resides in the cell membrane. It carries out the reaction di-trans,octa-cis-undecaprenyl diphosphate + H2O = di-trans,octa-cis-undecaprenyl phosphate + phosphate + H(+). Functionally, catalyzes the dephosphorylation of undecaprenyl diphosphate (UPP). The polypeptide is Undecaprenyl-diphosphatase (Korarchaeum cryptofilum (strain OPF8)).